We begin with the raw amino-acid sequence, 542 residues long: Calcium-dependent protein kinase 7 (542 aa).

A lipid anchor (N-myristoyl glycine) is attached at glycine 2. The Protein kinase domain occupies 79 to 337 (YIIGRKLGQG…AHEVLRHPWI (259 aa)). Residues 85-93 (LGQGQFGTT) and lysine 108 each bind ATP. Residue aspartate 203 is the Proton acceptor of the active site. The interval 343–373 (ATDQALDPSVISRLKQFSAMNKLKKLALRVI) is autoinhibitory domain. An EF-hand 1 domain is found at 380–415 (EEIAGLREMFKAVDTKNRGVITFGELREGLRRFGAE). Ca(2+) contacts are provided by aspartate 393, glutamate 404, aspartate 431, asparagine 433, threonine 435, glutamate 440, aspartate 465, aspartate 467, serine 469, tyrosine 471, lysine 476, aspartate 499, asparagine 501, aspartate 503, glutamine 505, and glutamate 510. Positions 416–451 (FKDTEIGDIMEAAHNDNNVTIHYEEFIAATLPLNKI) constitute an EF-hand 2; degenerate domain. EF-hand domains lie at 452 to 487 (EREE…HNME) and 488 to 521 (DSLL…SNVG).

The protein belongs to the protein kinase superfamily. Ser/Thr protein kinase family. CDPK subfamily. In terms of tissue distribution, expressed in roots. Expressed in leaf sheaths.

It localises to the membrane. Its subcellular location is the cytoplasm. It is found in the cytosol. The enzyme catalyses L-seryl-[protein] + ATP = O-phospho-L-seryl-[protein] + ADP + H(+). It carries out the reaction L-threonyl-[protein] + ATP = O-phospho-L-threonyl-[protein] + ADP + H(+). Activated by calcium. Autophosphorylation may play an important role in the regulation of the kinase activity. Functionally, may play a role in signal transduction pathways that involve calcium as a second messenger. May be a signaling component in the response to gibberellin and cold stress. The sequence is that of Calcium-dependent protein kinase 7 from Oryza sativa subsp. japonica (Rice).